A 62-amino-acid polypeptide reads, in one-letter code: MTIIFQFALIGLVLLSFVLVVGVPVAYATPQNWVESKKLLWVGSAVWIALVFLVGLLNFFVV.

2 consecutive transmembrane segments (helical) span residues 8-28 and 41-61; these read ALIG…VAYA and WVGS…NFFV.

The protein belongs to the PsbZ family. PSII is composed of 1 copy each of membrane proteins PsbA, PsbB, PsbC, PsbD, PsbE, PsbF, PsbH, PsbI, PsbJ, PsbK, PsbL, PsbM, PsbT, PsbX, PsbY, PsbZ, Psb30/Ycf12, peripheral proteins PsbO, CyanoQ (PsbQ), PsbU, PsbV and a large number of cofactors. It forms dimeric complexes.

It localises to the cellular thylakoid membrane. May control the interaction of photosystem II (PSII) cores with the light-harvesting antenna, regulates electron flow through the 2 photosystem reaction centers. PSII is a light-driven water plastoquinone oxidoreductase, using light energy to abstract electrons from H(2)O, generating a proton gradient subsequently used for ATP formation. In Nostoc punctiforme (strain ATCC 29133 / PCC 73102), this protein is Photosystem II reaction center protein Z.